The following is a 173-amino-acid chain: Small ribosomal subunit protein uS5 (173 aa).

The region spanning 17–80 (WQERVIQIRR…ADGKKQLIDV (64 aa)) is the S5 DRBM domain.

The protein belongs to the universal ribosomal protein uS5 family. In terms of assembly, part of the 30S ribosomal subunit. Contacts proteins S4 and S8.

With S4 and S12 plays an important role in translational accuracy. In terms of biological role, located at the back of the 30S subunit body where it stabilizes the conformation of the head with respect to the body. This chain is Small ribosomal subunit protein uS5, found in Rippkaea orientalis (strain PCC 8801 / RF-1) (Cyanothece sp. (strain PCC 8801)).